A 162-amino-acid chain; its full sequence is Regulator of sigma D (162 aa).

This sequence belongs to the Rsd/AlgQ family. In terms of assembly, interacts with RpoD.

The protein resides in the cytoplasm. Functionally, binds RpoD and negatively regulates RpoD-mediated transcription activation by preventing the interaction between the primary sigma factor RpoD with the catalytic core of the RNA polymerase and with promoter DNA. May be involved in replacement of the RNA polymerase sigma subunit from RpoD to RpoS during the transition from exponential growth to the stationary phase. In Salmonella typhi, this protein is Regulator of sigma D.